We begin with the raw amino-acid sequence, 234 residues long: MSILHATILTVFPEMFPGTLGHSLAGQALNKNIWSYDVINIRDFGLTKHKNIDDEAYGGGNGLIMRPDVLGSSIDHALALNPNAEMYYPSPRGRVFTQSFAKEMLKNKNLIFLCGRYEGIDERVIEEYNVKEISVGDYILSGGEIPTLTILDCLIRLLPGVLMNQNTLSSESFEEDGEFKGGLECSLYTRPEIWRDRAVPSVLLSGNHRLINEWKKEQSHMITKLRRPELLKDL.

Residues G115 and 135 to 140 (VGDYIL) each bind S-adenosyl-L-methionine.

It belongs to the RNA methyltransferase TrmD family. In terms of assembly, homodimer.

It localises to the cytoplasm. It catalyses the reaction guanosine(37) in tRNA + S-adenosyl-L-methionine = N(1)-methylguanosine(37) in tRNA + S-adenosyl-L-homocysteine + H(+). In terms of biological role, specifically methylates guanosine-37 in various tRNAs. The chain is tRNA (guanine-N(1)-)-methyltransferase from Rickettsia africae (strain ESF-5).